A 347-amino-acid chain; its full sequence is MIKEYYGAETFILNKDFAYILVIGTTDVSLIPGLTIAGATPELTHFTPAADAEYVLLGKCKSINTIPVSPTGIPTPALLTRASLSFINPLKIVVNAGSRILPKIPYIDLQGEPGKDIRKQALSMEKVNNIIENSIKLGEELSNEYELIMIGESIPAGTTTAMATLLALGYDAMDKVSSASPDNPKELKRKVVEEALRNLPTDPLQRLAKVSDPVLLGVAGTSLGFKGKILLAGGTQMTAAAAIINEFDKNKLKDITIGTTKWIVEDKFADMLSLAKQVGVKVLASMLDLSISAYEGIRAYEKGYVKEGVGAGGSAIMALVKGVSNNTLVRKIDELYGELVGSSNLHI.

The protein belongs to the UPF0284 family.

In Saccharolobus islandicus (strain M.14.25 / Kamchatka #1) (Sulfolobus islandicus), this protein is UPF0284 protein M1425_0030.